We begin with the raw amino-acid sequence, 249 residues long: Phosphomannomutase 2 (249 aa).

Catalysis depends on aspartate 12, which acts as the Nucleophile. Positions 12 and 14 each coordinate Mg(2+). Aspartate 14 acts as the Proton donor/acceptor in catalysis. Residues arginine 21, arginine 123, arginine 134, arginine 141, serine 179, and aspartate 181 each contribute to the alpha-D-mannose 1-phosphate site. Position 209 (aspartate 209) interacts with Mg(2+).

Belongs to the eukaryotic PMM family. Homodimer.

It localises to the cytoplasm. It catalyses the reaction alpha-D-mannose 1-phosphate = D-mannose 6-phosphate. It functions in the pathway nucleotide-sugar biosynthesis; GDP-alpha-D-mannose biosynthesis; alpha-D-mannose 1-phosphate from D-fructose 6-phosphate: step 2/2. In terms of biological role, involved in the synthesis of the GDP-mannose and dolichol-phosphate-mannose required for a number of critical mannosyl transfer reactions. This Dictyostelium discoideum (Social amoeba) protein is Phosphomannomutase 2 (pmmB).